Reading from the N-terminus, the 494-residue chain is MFLAKSIVCLALLAVANAQFDTNYASGRSGMVHLFEWKWDDIAAECENFLGPNGYAGVQVSPVNENAVKDSRPWWERYQPISYKLETRSGNEEQFASMVKRCNAVGVRTYVDVVFNHMAADGGTYGTGGSTASPSSKSYPGVPYSSLDFNPTCAISNYNDANEVRNCELVGLRDLNQGNSYVQDKVVEFLDHLIDLGVAGFRVDAAKHMWPADLAVIYGRLKNLNTDHGFASGSKAYIVQEVIDMGGEAISKSEYTGLGAITEFRHSDSIGKVFRGKDQLQYLTNWGTAWGFAASDRSLVFVDNHDNQRGHGAGGADVLTYKVPKQYKMASAFMLAHPFGTPRVMSSFSFTDTDQGPPTTDGHNIASPIFNSDNSCSGGWVCEHRWRQIYNMVAFRNTVGSDEIQNWWDNGSNQISFSRGSRGFVAFNNDNYDLNSSLQTGLPAGTYCDVISGSKSGSSCTGKTVTVGSDGRASINIGSSEDDGVLAIHVNAKL.

The signal sequence occupies residues 1 to 18; it reads MFLAKSIVCLALLAVANA. Residue Q19 is modified to Pyrrolidone carboxylic acid. C46 and C102 are disulfide-bonded. The Ca(2+) site is built by N116, R165, and D174. A disulfide bond links C153 and C167. A chloride-binding site is contributed by R202. D204 acts as the Nucleophile in catalysis. H208 serves as a coordination point for Ca(2+). Catalysis depends on E241, which acts as the Proton donor. Chloride-binding residues include N304 and R343. Intrachain disulfides connect C376–C382 and C448–C460.

This sequence belongs to the glycosyl hydrolase 13 family. In terms of assembly, monomer. Requires Ca(2+) as cofactor. The cofactor is chloride.

The catalysed reaction is Endohydrolysis of (1-&gt;4)-alpha-D-glucosidic linkages in polysaccharides containing three or more (1-&gt;4)-alpha-linked D-glucose units.. The protein is Alpha-amylase A (Amy-p) of Drosophila melanogaster (Fruit fly).